The sequence spans 310 residues: Methionyl-tRNA formyltransferase (310 aa).

111–114 serves as a coordination point for (6S)-5,6,7,8-tetrahydrofolate; that stretch reads SLLP.

Belongs to the Fmt family.

It carries out the reaction L-methionyl-tRNA(fMet) + (6R)-10-formyltetrahydrofolate = N-formyl-L-methionyl-tRNA(fMet) + (6S)-5,6,7,8-tetrahydrofolate + H(+). Attaches a formyl group to the free amino group of methionyl-tRNA(fMet). The formyl group appears to play a dual role in the initiator identity of N-formylmethionyl-tRNA by promoting its recognition by IF2 and preventing the misappropriation of this tRNA by the elongation apparatus. The chain is Methionyl-tRNA formyltransferase from Afipia carboxidovorans (strain ATCC 49405 / DSM 1227 / KCTC 32145 / OM5) (Oligotropha carboxidovorans).